Consider the following 125-residue polypeptide: Small ribosomal subunit protein uS13 (125 aa).

The interval 93–125 (RRGLPVRGQRTKTNARTRKGPKRTVAGKKKAGR) is disordered.

This sequence belongs to the universal ribosomal protein uS13 family. As to quaternary structure, part of the 30S ribosomal subunit. Forms a loose heterodimer with protein S19. Forms two bridges to the 50S subunit in the 70S ribosome.

In terms of biological role, located at the top of the head of the 30S subunit, it contacts several helices of the 16S rRNA. In the 70S ribosome it contacts the 23S rRNA (bridge B1a) and protein L5 of the 50S subunit (bridge B1b), connecting the 2 subunits; these bridges are implicated in subunit movement. Contacts the tRNAs in the A and P-sites. This Renibacterium salmoninarum (strain ATCC 33209 / DSM 20767 / JCM 11484 / NBRC 15589 / NCIMB 2235) protein is Small ribosomal subunit protein uS13.